We begin with the raw amino-acid sequence, 792 residues long: uncharacterized protein (792 aa).

Tandem repeats lie at residues 91–102, 103–114, 115–126, 127–138, 139–150, 151–162, 163–174, 175–186, 187–198, 199–210, 211–222, 223–234, 235–246, 247–258, 259–270, 271–282, 283–294, 295–306, 307–318, 319–330, 331–342, 343–354, 355–366, 367–378, and 379–390. The segment at 91–390 is 25 X 12 AA tandem repeat of N-[SV]-[RS]-T-[NS]-A-T-T-T-[AE]-[ST]-[IT]; the sequence is NSSTNATTTA…STNATTTEST (300 aa). A disordered region spans residues 113-417; the sequence is SINVRTSATT…RFHPVTDINK (305 aa). Residues 118-393 are compositionally biased toward low complexity; that stretch reads TSATTTESTN…ATTTESTNAS (276 aa). Basic and acidic residues predominate over residues 394-417; that stretch reads AKEDANKDGNAEDNRFHPVTDINK.

This is an uncharacterized protein from Saccharomyces cerevisiae (strain ATCC 204508 / S288c) (Baker's yeast).